We begin with the raw amino-acid sequence, 130 residues long: Small ribosomal subunit protein uS9 (130 aa).

The tract at residues 111-130 is disordered; it reads VERKKVGLRKARRRPQFSKR. Over residues 116 to 130 the composition is skewed to basic residues; sequence VGLRKARRRPQFSKR.

This sequence belongs to the universal ribosomal protein uS9 family.

In Enterobacter sp. (strain 638), this protein is Small ribosomal subunit protein uS9.